The sequence spans 240 residues: Ubiquinone biosynthesis O-methyltransferase (240 aa).

S-adenosyl-L-methionine-binding residues include Arg44, Gly64, Asp85, and Met129.

Belongs to the methyltransferase superfamily. UbiG/COQ3 family.

The enzyme catalyses a 3-demethylubiquinol + S-adenosyl-L-methionine = a ubiquinol + S-adenosyl-L-homocysteine + H(+). It catalyses the reaction a 3-(all-trans-polyprenyl)benzene-1,2-diol + S-adenosyl-L-methionine = a 2-methoxy-6-(all-trans-polyprenyl)phenol + S-adenosyl-L-homocysteine + H(+). It functions in the pathway cofactor biosynthesis; ubiquinone biosynthesis. Its function is as follows. O-methyltransferase that catalyzes the 2 O-methylation steps in the ubiquinone biosynthetic pathway. The sequence is that of Ubiquinone biosynthesis O-methyltransferase from Escherichia coli (strain K12 / MC4100 / BW2952).